The following is a 501-amino-acid chain: Glutamate--tRNA ligase (501 aa).

The 'HIGH' region motif lies at 11–21 (PSPTGALHIGG). Residues 260-264 (KLSKR) carry the 'KMSKS' region motif. An ATP-binding site is contributed by Lys-263.

This sequence belongs to the class-I aminoacyl-tRNA synthetase family. Glutamate--tRNA ligase type 1 subfamily. As to quaternary structure, monomer.

It is found in the cytoplasm. It carries out the reaction tRNA(Glu) + L-glutamate + ATP = L-glutamyl-tRNA(Glu) + AMP + diphosphate. Catalyzes the attachment of glutamate to tRNA(Glu) in a two-step reaction: glutamate is first activated by ATP to form Glu-AMP and then transferred to the acceptor end of tRNA(Glu). The polypeptide is Glutamate--tRNA ligase (Flavobacterium psychrophilum (strain ATCC 49511 / DSM 21280 / CIP 103535 / JIP02/86)).